The primary structure comprises 152 residues: Actin-related protein 2/3 complex subunit 5-B (152 aa).

The interval 21 to 44 (NKFVDDQLQEEPAEPQGPDEAEVD) is disordered. Residues 27–43 (QLQEEPAEPQGPDEAEV) are compositionally biased toward acidic residues.

This sequence belongs to the ARPC5 family. In terms of assembly, component of the Arp2/3 complex composed of actr2/arp2, actr3/arp3, arpc1 (arpc1a or arpc1b), arpc2, arpc3, arpc4 and arpc5.

It is found in the cytoplasm. The protein localises to the cytoskeleton. It localises to the cell projection. Its subcellular location is the nucleus. Functionally, component of the Arp2/3 complex, a multiprotein complex that mediates actin polymerization upon stimulation by nucleation-promoting factor (NPF). The Arp2/3 complex mediates the formation of branched actin networks in the cytoplasm, providing the force for cell motility. In addition to its role in the cytoplasmic cytoskeleton, the Arp2/3 complex also promotes actin polymerization in the nucleus, thereby regulating gene transcription and repair of damaged DNA. The Arp2/3 complex promotes homologous recombination (HR) repair in response to DNA damage by promoting nuclear actin polymerization, leading to drive motility of double-strand breaks (DSBs). The sequence is that of Actin-related protein 2/3 complex subunit 5-B (arpc5-b) from Xenopus laevis (African clawed frog).